Reading from the N-terminus, the 617-residue chain is Serine/threonine-protein kinase par-4 (617 aa).

Residues 1-11 (MDAPSTSSGAQ) show a composition bias toward polar residues. The tract at residues 1 to 59 (MDAPSTSSGAQSKLLMPGDDEADEDHQNRGDPNLQQKQKIQLNVDPDYDDDEDDDCFID) is disordered. The segment covering 46 to 57 (PDYDDDEDDDCF) has biased composition (acidic residues). A Protein kinase domain is found at 183–446 (YMWGGQIGTG…CLETMIHPWF (264 aa)). Residues 189–197 (IGTGSYGKV) and Lys-212 contribute to the ATP site. Catalysis depends on Asp-310, which acts as the Proton acceptor. The interval 523–617 (LEAKPGDGPD…CIFRSRTDSA (95 aa)) is disordered. Positions 587-597 (DPPPTAAPGAP) are enriched in pro residues.

It belongs to the protein kinase superfamily. CAMK Ser/Thr protein kinase family. LKB1 subfamily. In terms of assembly, interacts with strd-1. It depends on Mg(2+) as a cofactor. Mn(2+) is required as a cofactor. In terms of tissue distribution, expressed in the gonads, oocytes and early embryos (at protein level).

It is found in the cytoplasm. The protein resides in the cell cortex. The catalysed reaction is L-seryl-[protein] + ATP = O-phospho-L-seryl-[protein] + ADP + H(+). It catalyses the reaction L-threonyl-[protein] + ATP = O-phospho-L-threonyl-[protein] + ADP + H(+). Required for cytoplasmic partitioning and asymmetric cell division in early embryogenesis. Controls the asymmetric cell division of the Q.p neuroblast lineage. Involved in mediating cell polarization via regulation of anillin family scaffold proteins. Phosphorylates and restricts the asymmetry effectors mex-5 and mex-6 to the anterior cytoplasm of the zygote and maintains these phosphorylations until fertilization. May phosphorylate par-1. Required for strd-1 localization to the cell cortex of early embryos and may be required for strd-1 protein stabilization. May regulate the integrity of the early embryonic cortex in a strd-1-dependent manner. Phosphorylates and regulates aak-2 in response to oxidative stress and during dauer development. May also play a role in motility, behavioral response, regulation of lifespan and dauer formation through this pathway. Required to establish germline stem cell (GSC) quiescence during dauer development. Acts downstream of unc-40 in dendrite outgrowth. May play a role in cell shedding during embryogenesis, probably by phosphorylating pig-1. The protein is Serine/threonine-protein kinase par-4 (par-4) of Caenorhabditis elegans.